Consider the following 603-residue polypeptide: 65-kDa microtubule-associated protein 7 (603 aa).

3 coiled-coil regions span residues 48 to 79 (KECLEIYRRKVDEAANSKAQLHQSLVSIEAEI), 131 to 186 (DIKA…EKSD), and 468 to 502 (RLVSILEDYKLTRKQQEEEKRRYRDQKKMQDLLIK). Residues 501-559 (IKRRESIYGSKPSPRRSNSVRKTNGYNGDASVPPTPRRNSAGATNNDIMTTPRSYSSHR) are disordered. Position 513 is a phosphoserine (Ser513). Composition is skewed to polar residues over residues 515–526 (RRSNSVRKTNGY) and 537–559 (RRNSAGATNNDIMTTPRSYSSHR). Ser599 carries the post-translational modification Phosphoserine.

Belongs to the MAP65/ASE1 family. In terms of assembly, forms dimer. Binds to microtubules (MT).

Its subcellular location is the nucleus. The protein localises to the cytoplasm. It localises to the cytoskeleton. The protein resides in the spindle pole. The protein is 65-kDa microtubule-associated protein 7 (MAP65-7) of Arabidopsis thaliana (Mouse-ear cress).